A 527-amino-acid chain; its full sequence is Peptide chain release factor 3 (527 aa).

In terms of domain architecture, tr-type G spans 9 to 277 (AKRRTFAIIS…AVVDWAPRPL (269 aa)). GTP contacts are provided by residues 18-25 (SHPDAGKT), 86-90 (DTPGH), and 140-143 (NKLD).

It belongs to the TRAFAC class translation factor GTPase superfamily. Classic translation factor GTPase family. PrfC subfamily.

It is found in the cytoplasm. Functionally, increases the formation of ribosomal termination complexes and stimulates activities of RF-1 and RF-2. It binds guanine nucleotides and has strong preference for UGA stop codons. It may interact directly with the ribosome. The stimulation of RF-1 and RF-2 is significantly reduced by GTP and GDP, but not by GMP. The sequence is that of Peptide chain release factor 3 from Pseudomonas putida (strain ATCC 47054 / DSM 6125 / CFBP 8728 / NCIMB 11950 / KT2440).